A 481-amino-acid polypeptide reads, in one-letter code: Abl interactor 1 (481 aa).

Ala-2 carries the N-acetylalanine modification. Positions 18–79 (ALIESYQNLT…NNVLQLLDIQ (62 aa)) are required for binding to WASF1. Residues 45-107 (KALEETKAYT…DIHKEKVARR (63 aa)) enclose the t-SNARE coiled-coil homology domain. Position 53 is a phosphotyrosine (Tyr-53). The segment at 158–285 (AKHGNNQPAR…PGAAPGSQYG (128 aa)) is disordered. Positions 161-175 (GNNQPARTGTLSRTN) are enriched in polar residues. 2 positions are modified to phosphothreonine: Thr-174 and Thr-178. A phosphoserine mark is found at Ser-183 and Ser-187. Phosphotyrosine is present on Tyr-213. Thr-215 is subject to Phosphothreonine. Phosphoserine is present on residues Ser-216, Ser-222, and Ser-225. Positions 222–235 (SQHSPGRTASLNQR) are enriched in polar residues. Low complexity-rich tracts occupy residues 248 to 258 (SRENSGSSSIG) and 272 to 282 (GPAAPGAAPGS). Ser-292 and Ser-296 each carry phosphoserine. Disordered stretches follow at residues 318-348 (AQPH…LTPQ) and 361-392 (NIAD…PPPV). Composition is skewed to pro residues over residues 366-376 (PTPPPPPPPDD) and 383-392 (SPPPPPPPPV). The 60-residue stretch at 419-478 (NYIEKVVAIYDYTKDKDDELSFKEGAIIYVIKKNDDGWFEGVCNRVTGLFPGNYVESIMH) folds into the SH3 domain. At Tyr-428 the chain carries Phosphotyrosine. A Phosphoserine modification is found at Ser-439. Thr-480 is subject to Phosphothreonine.

This sequence belongs to the ABI family. As to quaternary structure, interacts with ENAH, Abelson murine leukemia virus V-ABL, ABL1, STX1A, SNAP25, VAMP2, and through its N-terminus with WASF1. Part of a complex consisting of ABI1, STX1A and SNAP25. Part of a complex consisting of ABI1, EPS8 and SOS1. Interacts with EPS8, SOS1, SOS2, GRB2, SPTA1, and the first SH3 domain of NCK1. Component of the WAVE2 complex composed of ABI1, CYFIP1/SRA1, NCKAP1/NAP1 (NCKAP1l/HEM1 in hematopoietic cells) and WASF2/WAVE2. Interacts (via SH3 domain) with SHANK2 and SHANK3, but not SHANK1; the interaction is direct. Interacts with the heterodimer MYC:MAX; the interaction may enhance MYC:MAX transcriptional activity. Interacts with FNBP1L (via the SH3 domain), WASF2, and CDC42, but only in the presence of FNBP1L. Post-translationally, phosphorylated on tyrosine residues after serum stimulation or induction by v-Abl. Seems to be phosphorylated at Tyr-53 by ABL1, required for nuclear but not for synaptic localization. In terms of tissue distribution, widely expressed with highest levels in bone marrow, spleen, brain, testes, and embryonic brain. In adult brain prominently expressed in the neocortex, hippocampus and dentate gyrus.

Its subcellular location is the cytoplasm. The protein localises to the nucleus. It is found in the cell projection. The protein resides in the lamellipodium. It localises to the filopodium. Its subcellular location is the growth cone. The protein localises to the postsynaptic density. It is found in the cytoskeleton. Functionally, may act in negative regulation of cell growth and transformation by interacting with nonreceptor tyrosine kinases ABL1 and/or ABL2. In vitro, at least isoform 2 and isoform 4 suppress the transforming activity of Abelson murine leukemia virus (v-Abl) after overexpression in fibroblasts. May play a role in regulation EGF-induced Erk pathway activation. Involved in cytoskeletal reorganization and EGFR signaling. Together with EPS8 participates in transduction of signals from Ras to Rac. In vitro, a trimeric complex of ABI1, EPS8 and SOS1 exhibits Rac specific guanine nucleotide exchange factor (GEF) activity and ABI1 seems to act as an adapter in the complex. Regulates ABL1/c-Abl-mediated phosphorylation of ENAH. Recruits WASF1 to lamellipodia and there seems to regulate WASF1 protein level. In brain, seems to regulate the dendritic outgrowth and branching as well as to determine the shape and number of synaptic contacts of developing neurons. The polypeptide is Abl interactor 1 (Mus musculus (Mouse)).